The chain runs to 160 residues: SsrA-binding protein (160 aa).

The segment at 136 to 160 (KRDTMRERDSNRELQRAVRNKGKED) is disordered.

It belongs to the SmpB family.

The protein resides in the cytoplasm. Functionally, required for rescue of stalled ribosomes mediated by trans-translation. Binds to transfer-messenger RNA (tmRNA), required for stable association of tmRNA with ribosomes. tmRNA and SmpB together mimic tRNA shape, replacing the anticodon stem-loop with SmpB. tmRNA is encoded by the ssrA gene; the 2 termini fold to resemble tRNA(Ala) and it encodes a 'tag peptide', a short internal open reading frame. During trans-translation Ala-aminoacylated tmRNA acts like a tRNA, entering the A-site of stalled ribosomes, displacing the stalled mRNA. The ribosome then switches to translate the ORF on the tmRNA; the nascent peptide is terminated with the 'tag peptide' encoded by the tmRNA and targeted for degradation. The ribosome is freed to recommence translation, which seems to be the essential function of trans-translation. This Pseudomonas putida (strain GB-1) protein is SsrA-binding protein.